A 247-amino-acid chain; its full sequence is Membrane-spanning 4-domains subfamily A member 6D (247 aa).

At 1–46 (MIPQVVTSETVTVISPNGISFPQTDKPQPSHQSQDSLKKHLKAEIK) the chain is on the cytoplasmic side. A helical membrane pass occupies residues 47-67 (VMAAIQIMCAVMVLSLGIILA). Topologically, residues 68–80 (SVPSNLHFTSVFS) are extracellular. A helical membrane pass occupies residues 81-101 (ILLESGYPFVGALFFAISGIL). At 102–121 (SIVTEKKMTKPLVHSSLALS) the chain is on the cytoplasmic side. The helical transmembrane segment at 122 to 142 (ILSVLSALTGIAILSVSLAAL) threads the bilayer. At 143 to 180 (EPALQQCKLAFTQLDTTQDAYHFFSPEPLNSCFVAKAA) the chain is on the extracellular side. The helical transmembrane segment at 181–201 (LTGVFSLMLISSVLELGLAVL) threads the bilayer. Topologically, residues 202-247 (TATLWWKQSSSAFSGNVIFLSQNSKNKSSVSSESLCNPTYENILTS) are cytoplasmic. At Ser-235 the chain carries Phosphoserine.

This sequence belongs to the MS4A family. Expressed in thymus, spleen, intestine, colon, testis, heart, liver, brain, kidney, peripheral lymph node and bone marrow.

It localises to the membrane. Its function is as follows. May be involved in signal transduction as a component of a multimeric receptor complex. This chain is Membrane-spanning 4-domains subfamily A member 6D (Ms4a6d), found in Mus musculus (Mouse).